We begin with the raw amino-acid sequence, 320 residues long: Cytochrome f (320 aa).

The signal sequence occupies residues 1 to 35; sequence MQIRNTFSSLKGEITRFISVSLMIYIITRASISNA. Heme is bound by residues Y36, C56, C59, and H60. A helical transmembrane segment spans residues 286 to 306; sequence VQGLLFFLASVVLAQIFLVLK.

It belongs to the cytochrome f family. As to quaternary structure, the 4 large subunits of the cytochrome b6-f complex are cytochrome b6, subunit IV (17 kDa polypeptide, petD), cytochrome f and the Rieske protein, while the 4 small subunits are PetG, PetL, PetM and PetN. The complex functions as a dimer. It depends on heme as a cofactor.

It is found in the plastid. The protein resides in the chloroplast thylakoid membrane. Its function is as follows. Component of the cytochrome b6-f complex, which mediates electron transfer between photosystem II (PSII) and photosystem I (PSI), cyclic electron flow around PSI, and state transitions. This chain is Cytochrome f, found in Citrus sinensis (Sweet orange).